Reading from the N-terminus, the 376-residue chain is Germination-specific cysteine protease 1 (376 aa).

The N-terminal stretch at Met1–Gly22 is a signal peptide. The propeptide at Asp23–Glu144 is activation peptide. N-linked (GlcNAc...) asparagine glycosylation occurs at Asn93. Cystine bridges form between Cys166/Cys208, Cys200/Cys241, and Cys299/Cys351. Cys169 is a catalytic residue. Catalysis depends on residues His305 and Asn325.

Belongs to the peptidase C1 family.

In terms of biological role, probable thiol protease. The polypeptide is Germination-specific cysteine protease 1 (Arabidopsis thaliana (Mouse-ear cress)).